The following is a 450-amino-acid chain: Oxygen-independent coproporphyrinogen III oxidase (450 aa).

Residues 42 to 276 form the Radical SAM core domain; it reads LPAGASASLY…CAIANALKEA (235 aa). Tyrosine 51 provides a ligand contact to S-adenosyl-L-methionine. [4Fe-4S] cluster-binding residues include cysteine 57 and cysteine 61. Position 63 (tyrosine 63) interacts with S-adenosyl-L-methionine. A [4Fe-4S] cluster-binding site is contributed by cysteine 64. S-adenosyl-L-methionine is bound by residues glycine 108, 109–110, glutamate 141, glutamine 168, arginine 180, aspartate 205, alanine 239, and isoleucine 325; that span reads GT.

This sequence belongs to the anaerobic coproporphyrinogen-III oxidase family. In terms of assembly, monomer. Requires [4Fe-4S] cluster as cofactor.

It localises to the cytoplasm. It catalyses the reaction coproporphyrinogen III + 2 S-adenosyl-L-methionine = protoporphyrinogen IX + 2 5'-deoxyadenosine + 2 L-methionine + 2 CO2. It functions in the pathway porphyrin-containing compound metabolism; protoporphyrin-IX biosynthesis; protoporphyrinogen-IX from coproporphyrinogen-III (AdoMet route): step 1/1. Its function is as follows. Involved in the heme biosynthesis. Catalyzes the anaerobic oxidative decarboxylation of propionate groups of rings A and B of coproporphyrinogen III to yield the vinyl groups in protoporphyrinogen IX. This Bradyrhizobium diazoefficiens (strain JCM 10833 / BCRC 13528 / IAM 13628 / NBRC 14792 / USDA 110) protein is Oxygen-independent coproporphyrinogen III oxidase (hemN).